Here is a 1221-residue protein sequence, read N- to C-terminus: X-linked retinitis pigmentosa GTPase regulator-interacting protein 1 (1221 aa).

2 stretches are compositionally biased toward polar residues: residues 1–15 and 88–97; these read MIPT…TQPP and GGTAPSSTSV. Disordered stretches follow at residues 1–22, 68–107, and 119–196; these read MIPT…MTRD, AEAA…SCSS, and SLAS…PEKM. Basic and acidic residues-rich tracts occupy residues 134-147 and 155-168; these read HRAE…RDRL and FKEH…RGEV. Residues 267–533 are a coiled coil; the sequence is LGAAHNALLS…EEQLKDVAYG (267 aa). Positions 723 to 843 constitute a C2 domain; it reads QKDEPRSGTW…AQNKSIQGDF (121 aa). The tract at residues 869-947 is disordered; sequence PENFPKPEAQ…YSRRKHGRKT (79 aa). The segment covering 903–914 has biased composition (polar residues); the sequence is QMVSIDTPTEAG. Positions 1027–1216 are interaction with RPGR; it reads SEAQTTDSDE…ALQAIYKEMT (190 aa).

The protein belongs to the RPGRIP1 family. Forms homodimers and elongated homopolymers. Interacts with NPHP4. Interacts with NEK4. Interacts with RPGR. Interacts with SPATA7. Interacts with CEP290/NPHP6; mediating the association between RPGR and CEP290/NPHP6. In terms of tissue distribution, retina, brain, skeletal muscle and kidney. Colocalizes with RGPR in the outer segment of rod photoreceptors and cone outer segments.

The protein localises to the cell projection. It localises to the cilium. In terms of biological role, may function as scaffolding protein. Required for normal location of RPGR at the connecting cilium of photoreceptor cells. Required for normal disk morphogenesis and disk organization in the outer segment of photoreceptor cells and for survival of photoreceptor cells. This Bos taurus (Bovine) protein is X-linked retinitis pigmentosa GTPase regulator-interacting protein 1 (RPGRIP1).